The chain runs to 1243 residues: Plasma membrane calcium-transporting ATPase 2 (1243 aa).

Over residues 1–13 the composition is skewed to polar residues; sequence MGDMTNSDFYSKN. Residues 1–24 form a disordered region; that stretch reads MGDMTNSDFYSKNQRNESSHGGEF. The Cytoplasmic portion of the chain corresponds to 1–94; that stretch reads MGDMTNSDFY…NFIPPKKPKT (94 aa). Phosphoserine is present on residues S18 and S27. The chain crosses the membrane as a helical span at residues 95 to 115; the sequence is FLQLVWEALQDVTLIILEIAA. Topologically, residues 116-152 are extracellular; sequence IISLGLSFYHPPGESNEGCATAQGGAEDEGEAEAGWI. The chain crosses the membrane as a helical span at residues 153-173; it reads EGAAILLSVICVVLVTAFNDW. The Cytoplasmic segment spans residues 174 to 390; it reads SKEKQFRGLQ…KEKSVLQGKL (217 aa). Residues 296–308 show a composition bias toward basic and acidic residues; it reads EEKKDKKGVKKGD. A disordered region spans residues 296 to 382; sequence EEKKDKKGVK…KKKANMHKKE (87 aa). Low complexity-rich tracts occupy residues 313–330 and 337–356; these read PAADGAAPANAAGSANAS and QDGSADSSQSKAKQQDGAAA. A helical membrane pass occupies residues 391–410; sequence TKLAVQIGKAGLVMSAITVI. Residues 411-443 lie on the Extracellular side of the membrane; the sequence is ILVLYFTVDTFVVNKKPWLTECTPVYVQYFVKF. The chain crosses the membrane as a helical span at residues 444–461; that stretch reads FIIGVTVLVVAVPEGLPL. Over 462–875 the chain is Cytoplasmic; the sequence is AVTISLAYSV…MWGRNVYDSI (414 aa). D499 (4-aspartylphosphate intermediate) is an active-site residue. Residues D820 and D824 each coordinate Mg(2+). A helical membrane pass occupies residues 876–895; it reads SKFLQFQLTVNVVAVIVAFT. Residues 896–905 lie on the Extracellular side of the membrane; it reads GACITQDSPL. The chain crosses the membrane as a helical span at residues 906–926; it reads KAVQMLWVNLIMDTFASLALA. Residues 927-946 lie on the Cytoplasmic side of the membrane; that stretch reads TEPPTETLLLRKPYGRNKPL. A helical transmembrane segment spans residues 947-969; the sequence is ISRTMMKNILGHAVYQLTLIFTL. Over 970 to 987 the chain is Extracellular; it reads LFVGEKMFQIDSGRNAPL. The helical transmembrane segment at 988–1009 threads the bilayer; it reads HSPPSEHYTIIFNTFVMMQLFN. The Cytoplasmic segment spans residues 1010–1028; that stretch reads EINARKIHGERNVFDGIFR. The helical transmembrane segment at 1029–1050 threads the bilayer; sequence NPIFCTIVLGTFAIQIVIVQFG. Over 1051–1060 the chain is Extracellular; it reads GKPFSCSPLQ. A helical membrane pass occupies residues 1061-1082; that stretch reads LDQWMWCIFIGLGELVWGQVIA. Over 1083-1243 the chain is Cytoplasmic; it reads TIPTSRLKFL…SPIHSLETSL (161 aa). Phosphoserine is present on residues E1107, I1116, D1117, R1121, W1130, F1131, and Q1138. The calmodulin-binding subdomain A stretch occupies residues 1123-1140; sequence LRRGQILWFRGLNRIQTQ. Residue T1139 is modified to Phosphothreonine; by PKC. Positions 1141-1150 are calmodulin-binding subdomain B; the sequence is IRVVKAFRSS. V1144, F1147, R1148, Y1152, R1161, T1162, I1175, and S1178 each carry phosphoserine. T1188 is subject to Phosphothreonine. A disordered region spans residues 1194–1243; the sequence is AALKQNSSPPSSLNKNNSAIDSGINLTTDTSKSATSSSPGSPIHSLETSL. 2 stretches are compositionally biased toward low complexity: residues 1196–1211 and 1220–1234; these read LKQNSSPPSSLNKNNS and TTDTSKSATSSSPGS. S1201 carries the phosphoserine; by PKA modification. A Phosphoserine modification is found at S1211.

Belongs to the cation transport ATPase (P-type) (TC 3.A.3) family. Type IIB subfamily. In terms of assembly, interacts with PDZD11. Isoforms containing segment B are found in brain, uterus, liver and kidney and in low levels in other tissues. Isoforms containing segment W are found in kidney, uterus, and pancreas. Isoforms containing segment Y are found in pancreas and in low levels in brain and heart. Isoforms containing segment Z are found in brain and heart and isoforms containing segment X are found in low levels in brain. Isoforms containing segment A are found in low levels in heart and small intestine while isoforms containing segment C are found in testis and in low levels in other tissues.

The protein localises to the cell membrane. It localises to the synapse. The protein resides in the apical cell membrane. It is found in the basolateral cell membrane. The enzyme catalyses Ca(2+)(in) + ATP + H2O = Ca(2+)(out) + ADP + phosphate + H(+). In terms of biological role, ATP-driven Ca(2+) ion pump involved in the maintenance of basal intracellular Ca(2+) levels in specialized cells of cerebellar circuit and vestibular and cochlear systems. Uses ATP as an energy source to transport cytosolic Ca(2+) ions across the plasma membrane to the extracellular compartment. Has fast activation and Ca(2+) clearance rate suited to control fast neuronal Ca(2+) dynamics. At parallel fiber to Purkinje neuron synapse, mediates presynaptic Ca(2+) efflux in response to climbing fiber-induced Ca(2+) rise. Provides for fast return of Ca(2+) concentrations back to their resting levels, ultimately contributing to long-term depression induction and motor learning. Plays an essential role in hearing and balance. In cochlear hair cells, shuttles Ca(2+) ions from stereocilia to the endolymph and dissipates Ca(2+) transients generated by the opening of the mechanoelectrical transduction channels. Regulates Ca(2+) levels in the vestibular system, where it contributes to the formation of otoconia. In non-excitable cells, regulates Ca(2+) signaling through spatial control of Ca(2+) ions extrusion and dissipation of Ca(2+) transients generated by store-operated channels. In lactating mammary gland, allows for the high content of Ca(2+) ions in the milk. This is Plasma membrane calcium-transporting ATPase 2 (Atp2b2) from Rattus norvegicus (Rat).